A 219-amino-acid chain; its full sequence is Uracil-DNA glycosylase (219 aa).

Catalysis depends on aspartate 63, which acts as the Proton acceptor.

It belongs to the uracil-DNA glycosylase (UDG) superfamily. UNG family.

The protein localises to the cytoplasm. It catalyses the reaction Hydrolyzes single-stranded DNA or mismatched double-stranded DNA and polynucleotides, releasing free uracil.. Functionally, excises uracil residues from the DNA which can arise as a result of misincorporation of dUMP residues by DNA polymerase or due to deamination of cytosine. This chain is Uracil-DNA glycosylase, found in Mesomycoplasma hyopneumoniae (strain 7448) (Mycoplasma hyopneumoniae).